The primary structure comprises 282 residues: Shikimate dehydrogenase (NADP(+)) (282 aa).

Shikimate contacts are provided by residues 15 to 17 (SKS) and threonine 62. The active-site Proton acceptor is lysine 66. Positions 87 and 103 each coordinate shikimate. NADP(+) is bound by residues 127 to 131 (GAGGA), 151 to 156 (NRTHTK), and methionine 220. Tyrosine 222 lines the shikimate pocket. Glycine 244 lines the NADP(+) pocket.

The protein belongs to the shikimate dehydrogenase family. In terms of assembly, homodimer.

The enzyme catalyses shikimate + NADP(+) = 3-dehydroshikimate + NADPH + H(+). It participates in metabolic intermediate biosynthesis; chorismate biosynthesis; chorismate from D-erythrose 4-phosphate and phosphoenolpyruvate: step 4/7. Involved in the biosynthesis of the chorismate, which leads to the biosynthesis of aromatic amino acids. Catalyzes the reversible NADPH linked reduction of 3-dehydroshikimate (DHSA) to yield shikimate (SA). The protein is Shikimate dehydrogenase (NADP(+)) of Shewanella baltica (strain OS195).